Consider the following 411-residue polypeptide: 2-acylphloroglucinol 4-prenyltransferase, chloroplastic (411 aa).

The N-terminal 91 residues, 1 to 91 (MELSSVSSFS…CNDQRGNSIR (91 aa)), are a transit peptide targeting the chloroplast. 8 helical membrane passes run 159-179 (LLGM…NQIF), 198-218 (ISVE…FILI), 226-246 (LLTS…VPPF), 253-273 (ITAF…VYYA), 278-298 (LGLA…ITFM), 333-353 (LLGT…AIIW), 356-376 (AFKS…LIFQ), and 391-411 (KSFY…YLFI).

This sequence belongs to the UbiA prenyltransferase family. The cofactor is Mg(2+). Expressed in glandular trichomes called lupulin glands, and in early stage and mature cones. Detected in leaves, but not in root, stem and first stage of flowers. No expression in male flowers.

The protein localises to the plastid. It localises to the chloroplast membrane. It carries out the reaction a 2-acylphloroglucinol + dimethylallyl diphosphate = a 2-acyl-4-prenylphloroglucinol + diphosphate. It participates in secondary metabolite biosynthesis. In terms of biological role, involved in the biosynthesis of prenylated phenolics natural products which contribute to the bitter taste of beer and display broad biological activities. Catalyzes the first prenylation step in the beta-bitter acid pathway. Abble to transfer dimethylallyl diphosphate (DMAPP) or geranyl diphosphate (GPP) to phlorisovalerophenone (PIVP), phlorisobutrylphenone (PIMP) and naringenin chalcone. Can also use phlorisobutyrophenone (PIBP) and phlormethylbutanophenone (PMBP) as substrates, but not 6'-O-methylated chalcone or naringenin. In Humulus lupulus (European hop), this protein is 2-acylphloroglucinol 4-prenyltransferase, chloroplastic.